The primary structure comprises 356 residues: UDP-N-acetylglucosamine--N-acetylmuramyl-(pentapeptide) pyrophosphoryl-undecaprenol N-acetylglucosamine transferase (356 aa).

UDP-N-acetyl-alpha-D-glucosamine contacts are provided by Ser-195 and Gln-287.

Belongs to the glycosyltransferase 28 family. MurG subfamily.

It is found in the cell membrane. It catalyses the reaction Mur2Ac(oyl-L-Ala-gamma-D-Glu-L-Lys-D-Ala-D-Ala)-di-trans,octa-cis-undecaprenyl diphosphate + UDP-N-acetyl-alpha-D-glucosamine = beta-D-GlcNAc-(1-&gt;4)-Mur2Ac(oyl-L-Ala-gamma-D-Glu-L-Lys-D-Ala-D-Ala)-di-trans,octa-cis-undecaprenyl diphosphate + UDP + H(+). It functions in the pathway cell wall biogenesis; peptidoglycan biosynthesis. Its function is as follows. Cell wall formation. Catalyzes the transfer of a GlcNAc subunit on undecaprenyl-pyrophosphoryl-MurNAc-pentapeptide (lipid intermediate I) to form undecaprenyl-pyrophosphoryl-MurNAc-(pentapeptide)GlcNAc (lipid intermediate II). The polypeptide is UDP-N-acetylglucosamine--N-acetylmuramyl-(pentapeptide) pyrophosphoryl-undecaprenol N-acetylglucosamine transferase (Streptococcus sanguinis (strain SK36)).